Reading from the N-terminus, the 397-residue chain is Acetate kinase 2 (397 aa).

Asparagine 8 provides a ligand contact to Mg(2+). Lysine 15 provides a ligand contact to ATP. Residue arginine 89 coordinates substrate. The active-site Proton donor/acceptor is aspartate 146. ATP is bound by residues 206–210 (HLGNG), 281–283 (DFR), and 329–333 (GVGEN). Glutamate 380 contributes to the Mg(2+) binding site.

The protein belongs to the acetokinase family. As to quaternary structure, homodimer. Mg(2+) is required as a cofactor. Mn(2+) serves as cofactor.

The protein resides in the cytoplasm. The catalysed reaction is acetate + ATP = acetyl phosphate + ADP. Its pathway is metabolic intermediate biosynthesis; acetyl-CoA biosynthesis; acetyl-CoA from acetate: step 1/2. In terms of biological role, catalyzes the formation of acetyl phosphate from acetate and ATP. Can also catalyze the reverse reaction. This Listeria monocytogenes serovar 1/2a (strain ATCC BAA-679 / EGD-e) protein is Acetate kinase 2.